The sequence spans 152 residues: Cornifin-A (152 aa).

Residues 20 to 40 (EVKQPCQPPPQEPCAPKTKEP) form a disordered region. A run of 14 repeats spans residues 27–34 (PPPQEPCA), 35–42 (PKTKEPCH), 43–49 (PIPEPCN), 50–57 (PKVPEPCQ), 58–65 (PKVPEPCQ), 66–73 (PKVPEPCQ), 74–81 (PKVPEPCQ), 82–89 (PKVPEPCQ), 90–97 (PKVPEPCQ), 98–105 (PKVPEPCH), 106–113 (PKAPEPCH), 114–121 (PVVPEPCQ), 122–129 (PVAPEPCQ), and 130–137 (PVVPEPCP). The 14 X 8 AA approximate tandem repeats stretch occupies residues 27-137 (PPPQEPCAPK…CQPVVPEPCP (111 aa)).

Belongs to the cornifin (SPRR) family. In terms of tissue distribution, in squamous epithelia lining the nasal vestibule and in the hard palate.

It is found in the cytoplasm. In terms of biological role, cross-linked envelope protein of keratinocytes. It is a keratinocyte protein that first appears in the cell cytosol, but ultimately becomes cross-linked to membrane proteins by transglutaminase. All that results in the formation of an insoluble envelope beneath the plasma membrane. This is Cornifin-A (Sprr1a) from Rattus norvegicus (Rat).